The sequence spans 151 residues: Peptide deformylase (151 aa).

2 residues coordinate Fe cation: Cys-88 and His-130. Glu-131 is a catalytic residue. Fe cation is bound at residue His-134.

Belongs to the polypeptide deformylase family. Fe(2+) is required as a cofactor.

It carries out the reaction N-terminal N-formyl-L-methionyl-[peptide] + H2O = N-terminal L-methionyl-[peptide] + formate. In terms of biological role, removes the formyl group from the N-terminal Met of newly synthesized proteins. Requires at least a dipeptide for an efficient rate of reaction. N-terminal L-methionine is a prerequisite for activity but the enzyme has broad specificity at other positions. This Heliobacterium modesticaldum (strain ATCC 51547 / Ice1) protein is Peptide deformylase.